A 393-amino-acid chain; its full sequence is Formate-dependent phosphoribosylglycinamide formyltransferase (393 aa).

N(1)-(5-phospho-beta-D-ribosyl)glycinamide is bound by residues 22–23 (EL) and E82. Residues R114, K155, 160–165 (SSGHGQ), 195–198 (EGFV), and E203 contribute to the ATP site. One can recognise an ATP-grasp domain in the interval 119 to 308 (RLAAEELGLP…EFALHARAIL (190 aa)). Mg(2+) contacts are provided by E267 and E279. N(1)-(5-phospho-beta-D-ribosyl)glycinamide contacts are provided by residues D286, K356, and 363 to 364 (RR).

Belongs to the PurK/PurT family. As to quaternary structure, homodimer.

It catalyses the reaction N(1)-(5-phospho-beta-D-ribosyl)glycinamide + formate + ATP = N(2)-formyl-N(1)-(5-phospho-beta-D-ribosyl)glycinamide + ADP + phosphate + H(+). It functions in the pathway purine metabolism; IMP biosynthesis via de novo pathway; N(2)-formyl-N(1)-(5-phospho-D-ribosyl)glycinamide from N(1)-(5-phospho-D-ribosyl)glycinamide (formate route): step 1/1. Involved in the de novo purine biosynthesis. Catalyzes the transfer of formate to 5-phospho-ribosyl-glycinamide (GAR), producing 5-phospho-ribosyl-N-formylglycinamide (FGAR). Formate is provided by PurU via hydrolysis of 10-formyl-tetrahydrofolate. The protein is Formate-dependent phosphoribosylglycinamide formyltransferase of Mannheimia succiniciproducens (strain KCTC 0769BP / MBEL55E).